A 635-amino-acid polypeptide reads, in one-letter code: Threonine--tRNA ligase (635 aa).

The TGS domain occupies 1–61 (MVSIRLPDGS…DHDVALAIVT (61 aa)). The catalytic stretch occupies residues 242–533 (DHRKLGKQLD…LIEHHAGAMP (292 aa)). Zn(2+) is bound by residues Cys333, His384, and His510.

It belongs to the class-II aminoacyl-tRNA synthetase family. In terms of assembly, homodimer. The cofactor is Zn(2+).

The protein localises to the cytoplasm. It catalyses the reaction tRNA(Thr) + L-threonine + ATP = L-threonyl-tRNA(Thr) + AMP + diphosphate + H(+). In terms of biological role, catalyzes the attachment of threonine to tRNA(Thr) in a two-step reaction: L-threonine is first activated by ATP to form Thr-AMP and then transferred to the acceptor end of tRNA(Thr). Also edits incorrectly charged L-seryl-tRNA(Thr). This Paraburkholderia phymatum (strain DSM 17167 / CIP 108236 / LMG 21445 / STM815) (Burkholderia phymatum) protein is Threonine--tRNA ligase.